A 320-amino-acid polypeptide reads, in one-letter code: Cytochrome f (320 aa).

Positions 1-35 are cleaved as a signal peptide; that stretch reads MNFFTHKKNNFGSFVTIFSFLVALGVTNLTPAAEA. Tyrosine 36, cysteine 56, cysteine 59, and histidine 60 together coordinate heme. The helical transmembrane segment at 286–306 threads the bilayer; the sequence is IQGLLVFFATVLFAQVLLVLK.

This sequence belongs to the cytochrome f family. In terms of assembly, the 4 large subunits of the cytochrome b6-f complex are cytochrome b6, subunit IV (17 kDa polypeptide, petD), cytochrome f and the Rieske protein, while the 4 small subunits are PetG, PetL, PetM and PetN. The complex functions as a dimer. The cofactor is heme.

It is found in the plastid. It localises to the chloroplast thylakoid membrane. Functionally, component of the cytochrome b6-f complex, which mediates electron transfer between photosystem II (PSII) and photosystem I (PSI), cyclic electron flow around PSI, and state transitions. The chain is Cytochrome f from Tetradesmus obliquus (Green alga).